The sequence spans 198 residues: Alpha-S1-casein (198 aa).

A signal peptide spans 1 to 15 (MKLLILTCLVASAVA). Disordered stretches follow at residues 28–47 (QTQRGGSSSSSSSEERLKEE) and 71–97 (SESTEQREASSISSSEEVVPKNTEQKH). A phosphoserine mark is found at Ser-39, Ser-80, Ser-81, Ser-83, Ser-84, and Ser-85.

This sequence belongs to the alpha-casein family. In terms of tissue distribution, mammary gland specific. Secreted in milk.

Its subcellular location is the secreted. Its function is as follows. Important role in the capacity of milk to transport calcium phosphate. This chain is Alpha-S1-casein (CSN1S1), found in Cavia porcellus (Guinea pig).